The following is a 341-amino-acid chain: Phosphatidylserine decarboxylase proenzyme (341 aa).

Residues aspartate 90, histidine 147, and serine 254 each act as charge relay system; for autoendoproteolytic cleavage activity in the active site. Residue serine 254 is the Schiff-base intermediate with substrate; via pyruvic acid; for decarboxylase activity of the active site. Serine 254 bears the Pyruvic acid (Ser); by autocatalysis mark. The tract at residues 287 to 341 (RQDEQTPVVFPEGTELEENDAAQPPVAATSEPVQADGQNPAAEVSGQTGHKPDAP) is disordered.

This sequence belongs to the phosphatidylserine decarboxylase family. PSD-B subfamily. Prokaryotic type I sub-subfamily. Heterodimer of a large membrane-associated beta subunit and a small pyruvoyl-containing alpha subunit. Pyruvate is required as a cofactor. Post-translationally, is synthesized initially as an inactive proenzyme. Formation of the active enzyme involves a self-maturation process in which the active site pyruvoyl group is generated from an internal serine residue via an autocatalytic post-translational modification. Two non-identical subunits are generated from the proenzyme in this reaction, and the pyruvate is formed at the N-terminus of the alpha chain, which is derived from the carboxyl end of the proenzyme. The autoendoproteolytic cleavage occurs by a canonical serine protease mechanism, in which the side chain hydroxyl group of the serine supplies its oxygen atom to form the C-terminus of the beta chain, while the remainder of the serine residue undergoes an oxidative deamination to produce ammonia and the pyruvoyl prosthetic group on the alpha chain. During this reaction, the Ser that is part of the protease active site of the proenzyme becomes the pyruvoyl prosthetic group, which constitutes an essential element of the active site of the mature decarboxylase.

Its subcellular location is the cell membrane. It carries out the reaction a 1,2-diacyl-sn-glycero-3-phospho-L-serine + H(+) = a 1,2-diacyl-sn-glycero-3-phosphoethanolamine + CO2. It functions in the pathway phospholipid metabolism; phosphatidylethanolamine biosynthesis; phosphatidylethanolamine from CDP-diacylglycerol: step 2/2. Functionally, catalyzes the formation of phosphatidylethanolamine (PtdEtn) from phosphatidylserine (PtdSer). The polypeptide is Phosphatidylserine decarboxylase proenzyme (Pectobacterium atrosepticum (strain SCRI 1043 / ATCC BAA-672) (Erwinia carotovora subsp. atroseptica)).